The following is a 441-amino-acid chain: Ribosomal protein uS12 methylthiotransferase RimO (441 aa).

Positions Pro8 to Pro118 constitute an MTTase N-terminal domain. Residues Cys17, Cys53, Cys82, Cys150, Cys154, and Cys157 each coordinate [4Fe-4S] cluster. Residues Leu136–Glu373 form the Radical SAM core domain. Positions Gln376–Val441 constitute a TRAM domain.

The protein belongs to the methylthiotransferase family. RimO subfamily. [4Fe-4S] cluster serves as cofactor.

The protein localises to the cytoplasm. The enzyme catalyses L-aspartate(89)-[ribosomal protein uS12]-hydrogen + (sulfur carrier)-SH + AH2 + 2 S-adenosyl-L-methionine = 3-methylsulfanyl-L-aspartate(89)-[ribosomal protein uS12]-hydrogen + (sulfur carrier)-H + 5'-deoxyadenosine + L-methionine + A + S-adenosyl-L-homocysteine + 2 H(+). Functionally, catalyzes the methylthiolation of an aspartic acid residue of ribosomal protein uS12. This chain is Ribosomal protein uS12 methylthiotransferase RimO, found in Klebsiella pneumoniae subsp. pneumoniae (strain ATCC 700721 / MGH 78578).